Consider the following 426-residue polypeptide: ATP-dependent Clp protease ATP-binding subunit ClpX (426 aa).

The region spanning 1–52 (MNEIKKRCSFCNKEESLDNPIINSGITPDVYICNYCLIVGSEILTGYLNKNP) is the ClpX-type ZB domain. 4 residues coordinate Zn(2+): Cys-8, Cys-11, Cys-33, and Cys-36. Position 129–136 (129–136 (PTGSGKTL)) interacts with ATP.

Belongs to the ClpX chaperone family. As to quaternary structure, component of the ClpX-ClpP complex. Forms a hexameric ring that, in the presence of ATP, binds to fourteen ClpP subunits assembled into a disk-like structure with a central cavity, resembling the structure of eukaryotic proteasomes.

Its function is as follows. ATP-dependent specificity component of the Clp protease. It directs the protease to specific substrates. Can perform chaperone functions in the absence of ClpP. This Helicobacter hepaticus (strain ATCC 51449 / 3B1) protein is ATP-dependent Clp protease ATP-binding subunit ClpX.